The primary structure comprises 201 residues: HTH-type transcriptional regulator Hpr (201 aa).

An HTH marR-type domain is found at 13 to 157 (AMLFSQRIAQ…MMCIIRNIYG (145 aa)). Residues 63-86 (ISEIAKFGVMHVSTAFNFSKKLEE) constitute a DNA-binding region (H-T-H motif).

Homodimer.

Its function is as follows. Negative regulator of protease production and sporulation. In Geobacillus sp. (strain WCH70), this protein is HTH-type transcriptional regulator Hpr.